The sequence spans 273 residues: Ribosomal RNA small subunit methyltransferase A (273 aa).

S-adenosyl-L-methionine is bound by residues N18, L20, G45, E66, D91, and N113.

The protein belongs to the class I-like SAM-binding methyltransferase superfamily. rRNA adenine N(6)-methyltransferase family. RsmA subfamily.

Its subcellular location is the cytoplasm. It carries out the reaction adenosine(1518)/adenosine(1519) in 16S rRNA + 4 S-adenosyl-L-methionine = N(6)-dimethyladenosine(1518)/N(6)-dimethyladenosine(1519) in 16S rRNA + 4 S-adenosyl-L-homocysteine + 4 H(+). In terms of biological role, specifically dimethylates two adjacent adenosines (A1518 and A1519) in the loop of a conserved hairpin near the 3'-end of 16S rRNA in the 30S particle. May play a critical role in biogenesis of 30S subunits. In Shigella flexneri, this protein is Ribosomal RNA small subunit methyltransferase A.